A 691-amino-acid chain; its full sequence is Dynamin-1-like protein (691 aa).

The Dynamin-type G domain occupies 22-301; it reads IIQLPQIAVV…LMHHIRDCLP (280 aa). Residues 32-39 are G1 motif; the sequence is GTQSSGKS. Residue 32–40 participates in GTP binding; the sequence is GTQSSGKSS. The tract at residues 58–60 is G2 motif; that stretch reads VTR. Residues 145-148 form a G3 motif region; the sequence is DLPG. Positions 214 to 217 are G4 motif; sequence TKLD. GTP contacts are provided by residues 214 to 220 and 245 to 248; these read TKLDLMD and NRSQ. The tract at residues 244 to 247 is G5 motif; sequence VNRS. Residues 343–488 are middle domain; sequence YCNTIEGTAK…NEMVHNLVAI (146 aa). Basic and acidic residues-rich tracts occupy residues 522–531 and 551–563; these read LPTSVPRDKM and KKGDEGQGEEKTK. Residues 522-573 form a disordered region; that stretch reads LPTSVPRDKMAGGAQAEQEGGTGTWRGMLKKGDEGQGEEKTKLQSSIPASPQ. The GED domain occupies 599–690; the sequence is CEVIERLIKS…VIAEIRETHL (92 aa). An important for homodimerization region spans residues 609-623; it reads YFLIVRKNIQDSVPK.

It belongs to the TRAFAC class dynamin-like GTPase superfamily. Dynamin/Fzo/YdjA family. As to quaternary structure, homotetramer; dimerizes through the N-terminal GTP-middle region of one molecule binding to the GED domain of another DNM1L molecule. Oligomerizes in a GTP-dependent manner to form membrane-associated tubules with a spiral pattern.

It is found in the cytoplasm. The protein localises to the cytosol. The protein resides in the golgi apparatus. It localises to the endomembrane system. Its subcellular location is the mitochondrion outer membrane. It is found in the peroxisome. The protein localises to the membrane. The protein resides in the clathrin-coated pit. It localises to the cytoplasmic vesicle. Its subcellular location is the secretory vesicle. It is found in the synaptic vesicle membrane. The catalysed reaction is GTP + H2O = GDP + phosphate + H(+). Functionally, functions in mitochondrial and peroxisomal division. Mediates membrane fission through oligomerization into membrane-associated tubular structures that wrap around the scission site to constrict and sever the mitochondrial membrane through a GTP hydrolysis-dependent mechanism. The specific recruitment at scission sites is mediated by membrane receptors like MFF, MIEF1 and MIEF2 for mitochondrial membranes. While the recruitment by the membrane receptors is GTP-dependent, the following hydrolysis of GTP induces the dissociation from the receptors and allows DNM1L filaments to curl into closed rings that are probably sufficient to sever a double membrane. May play a role in the circadian control of mitochondrial ATP production. The polypeptide is Dynamin-1-like protein (Danio rerio (Zebrafish)).